The sequence spans 394 residues: Acetyl-CoA acetyltransferase (394 aa).

Residue C89 is the Acyl-thioester intermediate of the active site. Residues H350 and C380 each act as proton acceptor in the active site.

The protein belongs to the thiolase-like superfamily. Thiolase family. As to quaternary structure, homotetramer.

The protein resides in the cytoplasm. It carries out the reaction 2 acetyl-CoA = acetoacetyl-CoA + CoA. It participates in biopolymer metabolism; poly-(R)-3-hydroxybutanoate biosynthesis. Its pathway is metabolic intermediate biosynthesis; (R)-mevalonate biosynthesis; (R)-mevalonate from acetyl-CoA: step 1/3. This is Acetyl-CoA acetyltransferase from Thiocystis violacea.